The chain runs to 957 residues: Glycine dehydrogenase (decarboxylating) (957 aa).

An N6-(pyridoxal phosphate)lysine modification is found at Lys-708.

This sequence belongs to the GcvP family. As to quaternary structure, the glycine cleavage system is composed of four proteins: P, T, L and H. Pyridoxal 5'-phosphate serves as cofactor.

The catalysed reaction is N(6)-[(R)-lipoyl]-L-lysyl-[glycine-cleavage complex H protein] + glycine + H(+) = N(6)-[(R)-S(8)-aminomethyldihydrolipoyl]-L-lysyl-[glycine-cleavage complex H protein] + CO2. The glycine cleavage system catalyzes the degradation of glycine. The P protein binds the alpha-amino group of glycine through its pyridoxal phosphate cofactor; CO(2) is released and the remaining methylamine moiety is then transferred to the lipoamide cofactor of the H protein. In Escherichia coli (strain K12 / MC4100 / BW2952), this protein is Glycine dehydrogenase (decarboxylating).